Consider the following 358-residue polypeptide: Homoserine O-acetyltransferase (358 aa).

The AB hydrolase-1 domain occupies 52-337; that stretch reads NVILICHALT…DEPYGHDAFL (286 aa). Catalysis depends on Ser-148, which acts as the Nucleophile. Arg-217 is a binding site for substrate. Residues Asp-304 and His-333 contribute to the active site. Asp-334 contributes to the substrate binding site.

It belongs to the AB hydrolase superfamily. MetX family. In terms of assembly, homodimer.

It localises to the cytoplasm. It catalyses the reaction L-homoserine + acetyl-CoA = O-acetyl-L-homoserine + CoA. It functions in the pathway amino-acid biosynthesis; L-methionine biosynthesis via de novo pathway; O-acetyl-L-homoserine from L-homoserine: step 1/1. Functionally, transfers an acetyl group from acetyl-CoA to L-homoserine, forming acetyl-L-homoserine. This Chlorobium luteolum (strain DSM 273 / BCRC 81028 / 2530) (Pelodictyon luteolum) protein is Homoserine O-acetyltransferase.